A 291-amino-acid chain; its full sequence is Gamma-gliadin B (291 aa).

An N-terminal signal peptide occupies residues 1–19 (MKTLLILTILAMAITIATA). The span at 38 to 81 (LQPHQPFSQQPQQIFPQPQQTFPHQPQQQFPQPQQPQQQFLQPR) shows a compositional bias: low complexity. The interval 38–137 (LQPHQPFSQQ…QSFPQQQPSL (100 aa)) is disordered. Over residues 82–99 (QPFPQQPQQPYPQQPQQP) the composition is skewed to pro residues. 2 stretches are compositionally biased toward low complexity: residues 100–117 (FPQTQQPQQPFPQSKQPQ) and 125–137 (QPQQSFPQQQPSL).

The protein belongs to the gliadin/glutenin family.

Gliadin is the major seed storage protein in wheat. This is Gamma-gliadin B from Triticum aestivum (Wheat).